A 332-amino-acid polypeptide reads, in one-letter code: UPF0194 membrane protein YbhG (332 aa).

The signal sequence occupies residues 1-16 (MMKKPVVIGLAVVVLA). Positions 107–209 (NEEIAQAAAA…LNLQDSTLIA (103 aa)) form a coiled coil.

This sequence belongs to the UPF0194 family.

It is found in the periplasm. The chain is UPF0194 membrane protein YbhG from Escherichia coli (strain K12 / MC4100 / BW2952).